We begin with the raw amino-acid sequence, 20 residues long: Juvenile hormone-binding protein (20 aa).

The protein resides in the secreted. Functionally, prevents juvenile hormone from being hydrolyzed by general esterases by combining with it specifically. The polypeptide is Juvenile hormone-binding protein (JHBP) (Bombyx mori (Silk moth)).